A 218-amino-acid polypeptide reads, in one-letter code: Large ribosomal subunit protein uL16 (218 aa).

The protein belongs to the universal ribosomal protein uL16 family. Component of the large ribosomal subunit. Mature ribosomes consist of a small (40S) and a large (60S) subunit. The 40S subunit contains about 33 different proteins and 1 molecule of RNA (18S). The 60S subunit contains about 49 different proteins and 3 molecules of RNA (28S, 5.8S and 5S).

This is Large ribosomal subunit protein uL16 (RpL10) from Drosophila melanogaster (Fruit fly).